A 426-amino-acid chain; its full sequence is Histidine--tRNA ligase (426 aa).

It belongs to the class-II aminoacyl-tRNA synthetase family. In terms of assembly, homodimer.

It localises to the cytoplasm. It carries out the reaction tRNA(His) + L-histidine + ATP = L-histidyl-tRNA(His) + AMP + diphosphate + H(+). The polypeptide is Histidine--tRNA ligase (Prochlorococcus marinus (strain AS9601)).